Reading from the N-terminus, the 624-residue chain is Phosphatidylserine decarboxylase proenzyme 2 (624 aa).

The tract at residues 1-30 is disordered; that stretch reads MGHSPSRHNACGGGGGDGESPPSPLPSRFE. The 114-residue stretch at 16–129 folds into the C2 domain; the sequence is GDGESPPSPL…KDLDEHSEVL (114 aa). 2 consecutive EF-hand domains span residues 156 to 191 and 192 to 227; these read TEQS…FGNK and LAVA…QQEK. Ca(2+) is bound by residues aspartate 169, asparagine 171, aspartate 173, glutamate 175, glutamate 180, aspartate 205, asparagine 207, aspartate 209, and glutamate 216. Catalysis depends on charge relay system; for autoendoproteolytic cleavage activity residues aspartate 425, histidine 481, and serine 569. Serine 569 serves as the catalytic Schiff-base intermediate with substrate; via pyruvic acid; for decarboxylase activity. Serine 569 is subject to Pyruvic acid (Ser); by autocatalysis.

It belongs to the phosphatidylserine decarboxylase family. PSD-B subfamily. Eukaryotic type II sub-subfamily. In terms of assembly, heterodimer of a large membrane-associated beta subunit and a small pyruvoyl-containing alpha subunit. It depends on pyruvate as a cofactor. Is synthesized initially as an inactive proenzyme. Formation of the active enzyme involves a self-maturation process in which the active site pyruvoyl group is generated from an internal serine residue via an autocatalytic post-translational modification. Two non-identical subunits are generated from the proenzyme in this reaction, and the pyruvate is formed at the N-terminus of the alpha chain, which is derived from the carboxyl end of the proenzyme. The autoendoproteolytic cleavage occurs by a canonical serine protease mechanism, in which the side chain hydroxyl group of the serine supplies its oxygen atom to form the C-terminus of the beta chain, while the remainder of the serine residue undergoes an oxidative deamination to produce ammonia and the pyruvoyl prosthetic group on the alpha chain. During this reaction, the Ser that is part of the protease active site of the proenzyme becomes the pyruvoyl prosthetic group, which constitutes an essential element of the active site of the mature decarboxylase.

It is found in the vacuole membrane. The protein localises to the endoplasmic reticulum membrane. The enzyme catalyses a 1,2-diacyl-sn-glycero-3-phospho-L-serine + H(+) = a 1,2-diacyl-sn-glycero-3-phosphoethanolamine + CO2. The protein operates within phospholipid metabolism; phosphatidylethanolamine biosynthesis; phosphatidylethanolamine from CDP-diacylglycerol: step 2/2. Catalyzes the formation of phosphatidylethanolamine (PtdEtn) from phosphatidylserine (PtdSer). Plays a central role in phospholipid metabolism and in the interorganelle trafficking of phosphatidylserine. In Oryza sativa subsp. japonica (Rice), this protein is Phosphatidylserine decarboxylase proenzyme 2.